A 161-amino-acid chain; its full sequence is MKGDAKVIEFLNAALRSELTAISQYWVHFRLQEDWGLAKMAKKSREESIEEMGHADKIIARILFLEGHPNLQKLDPLRIGEGPRETLECDLAGEHDALKLYREARDYCAEVGDIVSKNIFESLITDEEGHVDFLETQISLYDRLGPQGFALLNAAPMDAAE.

The 145-residue stretch at 1-145 (MKGDAKVIEF…TQISLYDRLG (145 aa)) folds into the Ferritin-like diiron domain. Fe cation contacts are provided by glutamate 18 and glutamate 51. Methionine 52 is a heme b binding site. 4 residues coordinate Fe cation: histidine 54, glutamate 94, glutamate 127, and histidine 130.

The protein belongs to the bacterioferritin family. As to quaternary structure, homooligomer of 24 subunits, arranged as 12 dimers, that are packed together to form an approximately spherical molecule with a central cavity, in which large amounts of iron can be deposited. Requires heme b as cofactor.

The enzyme catalyses 4 Fe(2+) + O2 + 4 H(+) = 4 Fe(3+) + 2 H2O. It catalyses the reaction Fe(2+)(in) = Fe(2+)(out). Its function is as follows. Iron-storage protein, whose ferroxidase center binds Fe(2+), oxidizes it using dioxygen to Fe(3+), and participates in the subsequent Fe(3+) oxide mineral core formation within the central cavity of the BFR protein shell. This chain is Bacterioferritin (bfr), found in Rhodobacter capsulatus (Rhodopseudomonas capsulata).